Consider the following 961-residue polypeptide: Outer capsid protein VP2 (961 aa).

This sequence belongs to the orbivirus VP2 family.

Its subcellular location is the virion. The VP2 protein is one of the two proteins (with VP5) target of the host immunogenic response. Responsible for viral which constitute the virus particle outer capsid. It is the major attachment to target host cell, probably by binding to sialic acid. This attachment induces virion internalization predominantly through clathrin-dependent endocytosis. This is Outer capsid protein VP2 (Segment-2) from Bluetongue virus 1 (isolate South Africa) (BTV 1).